A 180-amino-acid polypeptide reads, in one-letter code: MASTATNTDFFKTLLSPFSNGNAAQRSSRQNIVWLNRKQSGNNNRSLRVNGLFGGGKKDNKEDGQSKAGILGNMQNLYETVKKAQMVVQVEAVRVQKELAVAEFDGYCQGELVKVTLSGNQQPIRTDITDAAMELGSEKLSLLVTEAYKDAHSKSVLAMKERMSDLAQSLGMPPGLDGLK.

A chloroplast-targeting transit peptide spans 1–48; it reads MASTATNTDFFKTLLSPFSNGNAAQRSSRQNIVWLNRKQSGNNNRSLR. Residues 45–65 are disordered; it reads RSLRVNGLFGGGKKDNKEDGQ. Residues 56-65 show a composition bias toward basic and acidic residues; it reads GKKDNKEDGQ.

It belongs to the YbaB/EbfC family. In terms of assembly, homodimer. Binds to the translation initiation factors TIF3E1.

The protein resides in the plastid. It localises to the chloroplast. In terms of biological role, binds to DNA and alters its conformation. May be involved in regulation of gene expression, nucleoid organization and DNA protection. The sequence is that of Nucleoid-associated protein At4g30620, chloroplastic from Arabidopsis thaliana (Mouse-ear cress).